We begin with the raw amino-acid sequence, 966 residues long: Aminopeptidase N (966 aa).

Residues 1–8 (MAKGFYIS) lie on the Cytoplasmic side of the membrane. A helical; Signal-anchor for type II membrane protein transmembrane segment spans residues 9-32 (KTLGILGILLGVAAVCTIIALSVV). The cytosolic Ser/Thr-rich junction stretch occupies residues 33-68 (YAQEKNRNAENSATAPTLPGSTSATTATTTPAVDES). The Extracellular segment spans residues 33-966 (YAQEKNRNAE…VFKWFTENSS (934 aa)). Residues 42–64 (ENSATAPTLPGSTSATTATTTPA) are disordered. Over residues 44–64 (SATAPTLPGSTSATTATTTPA) the composition is skewed to low complexity. The interval 69–966 (KPWNQYRLPK…VFKWFTENSS (898 aa)) is metalloprotease. N-linked (GlcNAc...) asparagine glycans are attached at residues N106, N114, and N128. Y176 bears the Sulfotyrosine mark. N-linked (GlcNAc...) asparagine glycosylation is found at N234, N288, N318, and N332. 351 to 355 (GAMEN) serves as a coordination point for substrate. H387 is a Zn(2+) binding site. Catalysis depends on E388, which acts as the Proton acceptor. The Zn(2+) site is built by H391 and E410. Sulfotyrosine is present on residues Y418 and Y423. Residues N573, N606, N624, and N734 are each glycosylated (N-linked (GlcNAc...) asparagine). Cysteines 760 and 767 form a disulfide. 2 N-linked (GlcNAc...) asparagine glycosylation sites follow: N784 and N817. C797 and C833 are oxidised to a cystine. At Y852 the chain carries Phosphotyrosine.

Belongs to the peptidase M1 family. Homodimer. Interacts with SLC6A19. Zn(2+) serves as cofactor. Post-translationally, N- and O-glycosylated. Sulfated. In terms of processing, may undergo proteolysis and give rise to a soluble form. In terms of tissue distribution, expressed in the intestinal brush border (at protein level). Highly expressed in intestinal tract and kidney, present in liver, lymph node, spleen, and brain. Found as well in monocytes, macrophages, dendritic cells, veiled cells and B-cells but not on T-cells and thymocytes.

The protein resides in the cell membrane. It catalyses the reaction Release of an N-terminal amino acid, Xaa-|-Yaa- from a peptide, amide or arylamide. Xaa is preferably Ala, but may be most amino acids including Pro (slow action). When a terminal hydrophobic residue is followed by a prolyl residue, the two may be released as an intact Xaa-Pro dipeptide.. Functionally, broad specificity aminopeptidase which plays a role in the final digestion of peptides generated from hydrolysis of proteins by gastric and pancreatic proteases. Also involved in the processing of various peptides including peptide hormones, such as angiotensin III and IV, neuropeptides, and chemokines. May also be involved the cleavage of peptides bound to major histocompatibility complex class II molecules of antigen presenting cells. May have a role in angiogenesis and promote cholesterol crystallization. May have a role in amino acid transport by acting as binding partner of amino acid transporter SLC6A19 and regulating its activity. In Mus musculus (Mouse), this protein is Aminopeptidase N (Anpep).